A 485-amino-acid polypeptide reads, in one-letter code: Probable protein phosphatase 2C 3 (485 aa).

Residues 1-11 are compositionally biased toward low complexity; that stretch reads MSSPSPSSEAA. Disordered regions lie at residues 1–29 and 43–72; these read MSSP…AAGG and ARAE…AEGG. Over residues 13–23 the composition is skewed to basic residues; the sequence is AHHHHHQRRQH. The region spanning 107 to 353 is the PPM-type phosphatase domain; sequence SSSSSSSLAS…DDTTCIVVDM (247 aa). Asp129, Gly130, Asp305, and Asp344 together coordinate Mn(2+).

It belongs to the PP2C family. The cofactor is Mg(2+). Mn(2+) serves as cofactor.

The enzyme catalyses O-phospho-L-seryl-[protein] + H2O = L-seryl-[protein] + phosphate. It catalyses the reaction O-phospho-L-threonyl-[protein] + H2O = L-threonyl-[protein] + phosphate. The sequence is that of Probable protein phosphatase 2C 3 from Oryza sativa subsp. japonica (Rice).